The sequence spans 690 residues: Glycine--tRNA ligase beta subunit (690 aa).

It belongs to the class-II aminoacyl-tRNA synthetase family. In terms of assembly, tetramer of two alpha and two beta subunits.

The protein resides in the cytoplasm. The catalysed reaction is tRNA(Gly) + glycine + ATP = glycyl-tRNA(Gly) + AMP + diphosphate. The polypeptide is Glycine--tRNA ligase beta subunit (Buchnera aphidicola subsp. Acyrthosiphon pisum (strain 5A)).